A 447-amino-acid polypeptide reads, in one-letter code: MNKNTWIIGFTLFAMFFGAGNLIFPTQLGLESGHFFWPAILAFALTGIGLPLLGVVVGALDKHGYIGSFNKISPRFSLIFLIIIYLTIGPLFAIPRTASTSFEMSVTPIAQNSGNLALFIFTVIYFLIVLYLCLNPNKMIDRIGSLLTPLLLITIVAMIIKGFVDFSGHSSNYGMTNAYHSNLSGFSQGFTQGYLTMDAIASIAFSMIVVNAIKTTGIQHADKIFKQTIIAGLIAAIALVFIYISLGYIGNHINIPSDTLKELKAKDQNIGTYLLTTMATKGFGTFGKYLLGIIVSLACLTTACGLIVSVSEYFHRILPKIPYKVFVIFFILVSFILANQGLNSVIKMSVPVLSVIYPVAITVILLILIARFIPTKRIAQQIPLIIVAIESILSLITTQGWIRISFIDDLPLKEYSLEWFPIAVVATLVGYMISYFVKQSNIVYQKE.

Helical transmembrane passes span 5–25 (TWIIGFTLFAMFFGAGNLIFP), 40–60 (ILAFALTGIGLPLLGVVVGAL), 74–94 (PRFSLIFLIIIYLTIGPLFAI), 114–134 (GNLALFIFTVIYFLIVLYLCL), 143–163 (IGSLLTPLLLITIVAMIIKGF), 193–213 (GYLTMDAIASIAFSMIVVNAI), 229–249 (IIAGLIAAIALVFIYISLGYI), 290–310 (LLGIIVSLACLTTACGLIVSV), 317–337 (ILPKIPYKVFVIFFILVSFIL), 350–370 (VPVLSVIYPVAITVILLILIA), 382–402 (IPLIIVAIESILSLITTQGWI), and 417–437 (LEWFPIAVVATLVGYMISYFV).

Belongs to the branched chain amino acid transporter family.

It localises to the cell membrane. Functionally, component of the transport system for branched-chain amino acids (leucine, isoleucine and valine), which is coupled to a proton motive force. The chain is Putative branched-chain amino acid carrier protein SE_1090 from Staphylococcus epidermidis (strain ATCC 12228 / FDA PCI 1200).